The chain runs to 253 residues: Light-harvesting complex stress-related protein 1, chloroplastic (253 aa).

The transit peptide at 1–39 directs the protein to the chloroplast; the sequence is MAMMMRKAAAVPASSRRSVAVNSVSGKRTVSGKAGAPVP. Chlorophyll b is bound at residue Tyr-45. Chlorophyll a contacts are provided by Phe-60, Glu-81, and His-84. Residue Arg-86 coordinates chlorophyll b. Residues 87–107 traverse the membrane as a helical segment; that stretch reads VAMLAALGFIVGEQLQDFPLF. Gln-124 contributes to the chlorophyll a binding site. Residues 131–151 traverse the membrane as a helical segment; that stretch reads EPLLIAIGVAESYRVAVGWAT. 2 residues coordinate chlorophyll b: Glu-141 and Arg-144. Positions 190, 191, 194, 196, and 208 each coordinate chlorophyll a. The helical transmembrane segment at 197-217 threads the bilayer; it reads LAMIAIAAFVAQELVEQTEIF.

This sequence belongs to the light-harvesting chlorophyll a/b-binding (LHC) protein family.

Its subcellular location is the plastid. It localises to the chloroplast thylakoid membrane. Required for non-photochemical quenching (NPQ), a mechanism that converts and dissipates the harmful excess absorbed light energy into heat and protect the photosynthetic apparatus from photo-oxidative damage. Is able to sense luminal acidification of the thylakoid membranes, which occurs along with elevated electron flow caused by excess light, and to induce a large, fast, and reversible pH-dependent quenching in LHCII-containing membranes. Mediates excitation energy transfer from light-harvesting complex II (LHCII) to photosystem I (PSI), rather than photosystem II (PSII), at low pH, which mimics the acidified lumen of the thylakoid membranes in high light-exposed chloroplasts. Activates PSI-dependent fluorescence quenching in addition to dissipating excitation energy in LHCII to avoid photooxidative stress under excess light. This Chlamydomonas reinhardtii (Chlamydomonas smithii) protein is Light-harvesting complex stress-related protein 1, chloroplastic.